A 180-amino-acid chain; its full sequence is Large ribosomal subunit protein uL6 (180 aa).

Belongs to the universal ribosomal protein uL6 family. Part of the 50S ribosomal subunit.

This protein binds to the 23S rRNA, and is important in its secondary structure. It is located near the subunit interface in the base of the L7/L12 stalk, and near the tRNA binding site of the peptidyltransferase center. The chain is Large ribosomal subunit protein uL6 from Clostridium botulinum (strain Okra / Type B1).